The primary structure comprises 328 residues: Probable voltage-gated potassium channel subunit beta (328 aa).

W21, Q27, and D49 together coordinate NADP(+). Residue Y54 is the Proton donor/acceptor of the active site. 14 residues coordinate NADP(+): S152, Q178, W207, S208, P209, L210, A211, K218, R229, G285, T287, Q291, E294, and N295.

The protein belongs to the shaker potassium channel beta subunit family. In terms of assembly, forms heteromultimeric complexes with potassium channel alpha subunits. In terms of tissue distribution, expressed in late-developed leaves with the highest expression in the flag leaf (at protein level).

Functionally, probable accessory potassium channel protein which modulates the activity of the pore-forming alpha subunit. The protein is Probable voltage-gated potassium channel subunit beta (KOB1) of Oryza sativa subsp. japonica (Rice).